The chain runs to 250 residues: Bcl-2-like protein 12 (250 aa).

Residues Gly-24–Phe-46 form a disordered region. Ser-29 carries the phosphoserine modification. Thr-33 carries the phosphothreonine modification. Residue Ser-37 is modified to Phosphoserine. Omega-N-methylarginine is present on Arg-60. A phosphoserine mark is found at Ser-111, Ser-158, Ser-159, Ser-161, and Ser-189. The BH2 motif lies at Trp-227–Leu-238.

This sequence belongs to the Bcl-2 family. In terms of tissue distribution, expressed mainly in breast, thymus, prostate, fetal liver, colon, placenta, pancreas, small intestine, spinal cord, kidney, and bone marrow and to a lesser extent in many other tissues. Isoform 2 is primarily expressed in skeletal muscle.

This is Bcl-2-like protein 12 from Homo sapiens (Human).